A 136-amino-acid chain; its full sequence is Psoriasis susceptibility 1 candidate gene 2 protein homolog (136 aa).

The first 22 residues, 1 to 22 (MILNWKLLGILVLCLHTRGISG), serve as a signal peptide directing secretion. The interval 20–136 (ISGSEDHPSH…DLDPPREEYR (117 aa)) is disordered. Residues 23 to 33 (SEDHPSHPPAE) show a composition bias toward basic and acidic residues. Composition is skewed to pro residues over residues 44 to 74 (PQGP…PPWR) and 83 to 116 (PPEP…PPAP). Residues 117–136 (EVDHRPQEEPDLDPPREEYR) are compositionally biased toward basic and acidic residues.

It localises to the secreted. This chain is Psoriasis susceptibility 1 candidate gene 2 protein homolog (PSORS1C2), found in Pan troglodytes (Chimpanzee).